A 103-amino-acid chain; its full sequence is Large ribosomal subunit protein bL21 (103 aa).

It belongs to the bacterial ribosomal protein bL21 family. Part of the 50S ribosomal subunit. Contacts protein L20.

Its function is as follows. This protein binds to 23S rRNA in the presence of protein L20. This chain is Large ribosomal subunit protein bL21, found in Ralstonia nicotianae (strain ATCC BAA-1114 / GMI1000) (Ralstonia solanacearum).